We begin with the raw amino-acid sequence, 751 residues long: Catalase-peroxidase 1 (751 aa).

Residues 1–11 are compositionally biased toward basic and acidic residues; it reads MTDKQHTRSVS. The tract at residues 1–31 is disordered; the sequence is MTDKQHTRSVSESENPAIPSPTPKVSRPRRN. The tryptophyl-tyrosyl-methioninium (Trp-Tyr) (with M-251) cross-link spans 103–225; that stretch reads WHAAGTYRIA…LANVQMGLIY (123 aa). Histidine 104 (proton acceptor) is an active-site residue. The segment at residues 225–251 is a cross-link (tryptophyl-tyrosyl-methioninium (Tyr-Met) (with W-103)); the sequence is YVNPEGPGGNPDPLAAARDIRETFARM. Heme b is bound at residue histidine 266. Residues 345–375 form a disordered region; it reads AGAKQWKPKNPEANDTVPDAHGASRRHSPTM.

It belongs to the peroxidase family. Peroxidase/catalase subfamily. Homodimer or homotetramer. Heme b serves as cofactor. Formation of the three residue Trp-Tyr-Met cross-link is important for the catalase, but not the peroxidase activity of the enzyme.

It catalyses the reaction H2O2 + AH2 = A + 2 H2O. The enzyme catalyses 2 H2O2 = O2 + 2 H2O. Functionally, bifunctional enzyme with both catalase and broad-spectrum peroxidase activity. The polypeptide is Catalase-peroxidase 1 (Cupriavidus pinatubonensis (strain JMP 134 / LMG 1197) (Cupriavidus necator (strain JMP 134))).